The primary structure comprises 1187 residues: Non-receptor tyrosine-protein kinase TYK2 (1187 aa).

The 406-residue stretch at 26–431 (GGLKVLLHWA…GYFRLTADSS (406 aa)) folds into the FERM domain. The residue at position 292 (Tyr-292) is a Phosphotyrosine. The segment at 335 to 366 (KEEGSSGSSGRNPQASLFGKKAKAHKAVGQPA) is disordered. A compositionally biased stretch (polar residues) spans 339–349 (SSGSSGRNPQA). The region spanning 450–529 (GIHGPLLEPF…GRSFPSVREL (80 aa)) is the SH2; atypical domain. Phosphoserine is present on residues Ser-499 and Ser-525. The 287-residue stretch at 589–875 (ITQLSHLGQG…LTRLQPHNLA (287 aa)) folds into the Protein kinase 1 domain. Position 604 is a phosphotyrosine (Tyr-604). Positions 610-629 (VEGSGDPEEGKMDDEDPLVP) are disordered. A compositionally biased stretch (acidic residues) spans 614–626 (GDPEEGKMDDEDP). Position 884 is a phosphoserine (Ser-884). In terms of domain architecture, Protein kinase 2 spans 897–1176 (LKKIRDLGEG…PILKTVHEKY (280 aa)). Residues 903-911 (LGEGHFGKV) and Lys-930 each bind ATP. Residue Asp-1023 is the Proton acceptor of the active site. Residue Tyr-1054 is modified to Phosphotyrosine; by autocatalysis. Phosphotyrosine is present on Tyr-1055.

The protein belongs to the protein kinase superfamily. Tyr protein kinase family. JAK subfamily. Interacts (via FERM domain) with JAKMIP1. Interacts with PIK3R1; this interaction is important for cell migration. Interacts with MPL/TPOR. In terms of assembly, (Microbial infection) Interacts with Epstein-Barr virus protein LMP1; this interaction inhibits TYK2-mediated interferon signaling. As to quaternary structure, (Microbial infection) Interacts with papillomavirus-18 protein E6; this interaction impairs JAK-STAT activation by interferon-alpha. (Microbial infection) Interacts with Epstein-Barr virus (EBV) tegument protein BGLF2; this interaction participates in the inhibition of type I IFN signaling by the virus. Post-translationally, phosphorylated. Phosphorylation by JAK1 at Tyr-1054 and Tyr-1055 induces kinase activation. In terms of tissue distribution, observed in all cell lines analyzed. Expressed in a variety of lymphoid and non-lymphoid cell lines.

The enzyme catalyses L-tyrosyl-[protein] + ATP = O-phospho-L-tyrosyl-[protein] + ADP + H(+). With respect to regulation, the protein kinase 1 domain (also termed pseudokinase domain) mediates autoinhibition of the TYK2 kinase domain. In terms of biological role, tyrosine kinase of the non-receptor type involved in numerous cytokines and interferons signaling, which regulates cell growth, development, cell migration, innate and adaptive immunity. Plays both structural and catalytic roles in numerous interleukins and interferons (IFN-alpha/beta) signaling. Associates with heterodimeric cytokine receptor complexes and activates STAT family members including STAT1, STAT3, STAT4 or STAT6. The heterodimeric cytokine receptor complexes are composed of (1) a TYK2-associated receptor chain (IFNAR1, IL12RB1, IL10RB or IL13RA1), and (2) a second receptor chain associated either with JAK1 or JAK2. In response to cytokine-binding to receptors, phosphorylates and activates receptors (IFNAR1, IL12RB1, IL10RB or IL13RA1), creating docking sites for STAT members. In turn, recruited STATs are phosphorylated by TYK2 (or JAK1/JAK2 on the second receptor chain), form homo- and heterodimers, translocate to the nucleus, and regulate cytokine/growth factor responsive genes. Negatively regulates STAT3 activity by promototing phosphorylation at a specific tyrosine that differs from the site used for signaling. The protein is Non-receptor tyrosine-protein kinase TYK2 (TYK2) of Homo sapiens (Human).